The chain runs to 67 residues: MPQGTVKWFNAEKGFGFIAPEDGSADVFVHYTEIQGTGFRTLEENQKVEFEIGHSPKGPQATGVRSL.

A CSD domain is found at 4–64 (GTVKWFNAEK…SPKGPQATGV (61 aa)).

The protein localises to the cytoplasm. The polypeptide is Probable cold shock protein A (cspA) (Mycobacterium tuberculosis (strain ATCC 25618 / H37Rv)).